The chain runs to 239 residues: Pyridoxine 5'-phosphate synthase (239 aa).

Asparagine 7 is a 3-amino-2-oxopropyl phosphate binding site. 9–10 (DH) contributes to the 1-deoxy-D-xylulose 5-phosphate binding site. 3-amino-2-oxopropyl phosphate is bound at residue arginine 18. Histidine 43 serves as the catalytic Proton acceptor. Residues arginine 45 and histidine 50 each coordinate 1-deoxy-D-xylulose 5-phosphate. The active-site Proton acceptor is glutamate 70. 1-deoxy-D-xylulose 5-phosphate is bound at residue threonine 100. Histidine 191 (proton donor) is an active-site residue. Residues glycine 192 and 213–214 (GH) each bind 3-amino-2-oxopropyl phosphate.

It belongs to the PNP synthase family. Homooctamer; tetramer of dimers.

Its subcellular location is the cytoplasm. The enzyme catalyses 3-amino-2-oxopropyl phosphate + 1-deoxy-D-xylulose 5-phosphate = pyridoxine 5'-phosphate + phosphate + 2 H2O + H(+). It functions in the pathway cofactor biosynthesis; pyridoxine 5'-phosphate biosynthesis; pyridoxine 5'-phosphate from D-erythrose 4-phosphate: step 5/5. In terms of biological role, catalyzes the complicated ring closure reaction between the two acyclic compounds 1-deoxy-D-xylulose-5-phosphate (DXP) and 3-amino-2-oxopropyl phosphate (1-amino-acetone-3-phosphate or AAP) to form pyridoxine 5'-phosphate (PNP) and inorganic phosphate. This chain is Pyridoxine 5'-phosphate synthase, found in Geotalea daltonii (strain DSM 22248 / JCM 15807 / FRC-32) (Geobacter daltonii).